A 567-amino-acid chain; its full sequence is Protein phosphatase 1 regulatory inhibitor subunit 16B (567 aa).

A coiled-coil region spans residues 15–55; the sequence is EKVPTLERLRAAQKRRAQQLKKWAQYEQDLQHRKRKHERKR. At S69 the chain carries Phosphoserine. 4 ANK repeats span residues 100–129, 133–162, 228–257, and 261–290; these read DGLT…NVNA, ELWT…DLLA, QGAT…RVDV, and DGWE…SLSA. Phosphoserine is present on residues S333, S337, and S350. A disordered region spans residues 378–403; it reads RTSTYNGDIRETRTDQENKDPNPRLE. A compositionally biased stretch (basic and acidic residues) spans 385 to 403; the sequence is DIRETRTDQENKDPNPRLE. A Phosphoserine modification is found at S476. Residues 504–515 are compositionally biased toward polar residues; that stretch reads SSMARTGESSSE. A disordered region spans residues 504-525; it reads SSMARTGESSSEGKAPLIGGRT. One copy of the ANK 5 repeat lies at 530 to 559; the sequence is SNGTSVYYTVTSGDPPLLKFKAPIEEMEEK. Residue C563 is the site of S-palmitoyl cysteine attachment. The residue at position 564 (C564) is a Cysteine methyl ester. C564 carries the S-farnesyl cysteine lipid modification. Positions 565 to 567 are cleaved as a propeptide — removed in mature form; the sequence is RIS.

As to quaternary structure, interacts with PPP1CA, PPP1CB and MSN. Interacts (via its fourth ankyrin repeat) with the mature dimeric form of RPSA/LAMR1. Interacts with EEF1A1. Interacts with PTEN. Interacts with ECE1. Post-translationally, phosphorylated by PKA and, after PKA priming, by GSK3B. Phosphorylation by GSK3B reduces its association with PP1C and enhances PP1C activity. Dephosphorylation by its associated PP1C results in enhanced association with PP1C, but reduced PP1C activity.

Its subcellular location is the cell membrane. The protein localises to the nucleus. It localises to the cell projection. Regulator of protein phosphatase 1 (PP1) that acts as a positive regulator of pulmonary endothelial cell (EC) barrier function. Involved in the regulation of the PI3K/AKT signaling pathway, angiogenesis and endothelial cell proliferation. Regulates angiogenesis and endothelial cell proliferation through the control of ECE1 dephosphorylation, trafficking and activity. Protects the endothelial barrier from lipopolysaccharide (LPS)-induced vascular leakage. Involved in the regulation of endothelial cell filopodia extension. May be a downstream target for TGF-beta1 signaling cascade in endothelial cells. Involved in PKA-mediated moesin dephosphorylation which is important in EC barrier protection against thrombin stimulation. Promotes the interaction of PPP1CA with RPSA/LAMR1 and in turn facilitates the dephosphorylation of RPSA/LAMR1. Involved in the dephosphorylation of EEF1A1. The chain is Protein phosphatase 1 regulatory inhibitor subunit 16B (PPP1R16B) from Homo sapiens (Human).